The following is a 175-amino-acid chain: Protein OPG036 (175 aa).

The protein belongs to the poxviridae OPG036 family.

The protein resides in the host nucleus. Plays a role in the inhibition of host innate immune response. Within the host nucleus, inhibits activation of interferon-beta promoter by inhibiting IRF3 activation. In Bos taurus (Bovine), this protein is Protein OPG036 (OPG036).